Reading from the N-terminus, the 229-residue chain is Potassium/proton antiporter CemA (229 aa).

Helical transmembrane passes span 7 to 27 and 107 to 127; these read FTPLFYLASIVFLPWWISFSV and ILHFSTNIIWFGILSGYSILG.

Belongs to the CemA family.

It localises to the plastid. Its subcellular location is the chloroplast inner membrane. The enzyme catalyses K(+)(in) + H(+)(out) = K(+)(out) + H(+)(in). Its function is as follows. Contributes to K(+)/H(+) antiport activity by supporting proton efflux to control proton extrusion and homeostasis in chloroplasts in a light-dependent manner to modulate photosynthesis. Prevents excessive induction of non-photochemical quenching (NPQ) under continuous-light conditions. Indirectly promotes efficient inorganic carbon uptake into chloroplasts. The chain is Potassium/proton antiporter CemA from Solanum tuberosum (Potato).